Reading from the N-terminus, the 224-residue chain is Deoxyribose-phosphate aldolase (224 aa).

Asp-94 serves as the catalytic Proton donor/acceptor. Residue Lys-156 is the Schiff-base intermediate with acetaldehyde of the active site. The active-site Proton donor/acceptor is the Lys-184.

It belongs to the DeoC/FbaB aldolase family. DeoC type 1 subfamily.

Its subcellular location is the cytoplasm. It carries out the reaction 2-deoxy-D-ribose 5-phosphate = D-glyceraldehyde 3-phosphate + acetaldehyde. It functions in the pathway carbohydrate degradation; 2-deoxy-D-ribose 1-phosphate degradation; D-glyceraldehyde 3-phosphate and acetaldehyde from 2-deoxy-alpha-D-ribose 1-phosphate: step 2/2. In terms of biological role, catalyzes a reversible aldol reaction between acetaldehyde and D-glyceraldehyde 3-phosphate to generate 2-deoxy-D-ribose 5-phosphate. The sequence is that of Deoxyribose-phosphate aldolase from Methanocella arvoryzae (strain DSM 22066 / NBRC 105507 / MRE50).